We begin with the raw amino-acid sequence, 456 residues long: Bifunctional protein GlmU (456 aa).

Positions 1–229 (MLNSAMSVVI…ISETDGVNNR (229 aa)) are pyrophosphorylase. UDP-N-acetyl-alpha-D-glucosamine-binding positions include 11 to 14 (LAAG), Lys25, Gln76, 81 to 82 (GT), 103 to 105 (YGD), Gly140, Glu154, Asn169, and Asn227. Asp105 serves as a coordination point for Mg(2+). Asn227 contributes to the Mg(2+) binding site. Residues 230-250 (LQLSRLERIYQAEQAEKLLLS) are linker. Residues 251–456 (GVMLRDPARF…QGWQRPVKKK (206 aa)) form an N-acetyltransferase region. UDP-N-acetyl-alpha-D-glucosamine is bound by residues Arg333 and Lys351. The Proton acceptor role is filled by His363. UDP-N-acetyl-alpha-D-glucosamine-binding residues include Tyr366 and Asn377. Acetyl-CoA is bound by residues Ala380, 386-387 (NY), Ser405, Ala423, and Arg440.

It in the N-terminal section; belongs to the N-acetylglucosamine-1-phosphate uridyltransferase family. In the C-terminal section; belongs to the transferase hexapeptide repeat family. In terms of assembly, homotrimer. Requires Mg(2+) as cofactor.

The protein resides in the cytoplasm. It carries out the reaction alpha-D-glucosamine 1-phosphate + acetyl-CoA = N-acetyl-alpha-D-glucosamine 1-phosphate + CoA + H(+). The enzyme catalyses N-acetyl-alpha-D-glucosamine 1-phosphate + UTP + H(+) = UDP-N-acetyl-alpha-D-glucosamine + diphosphate. It participates in nucleotide-sugar biosynthesis; UDP-N-acetyl-alpha-D-glucosamine biosynthesis; N-acetyl-alpha-D-glucosamine 1-phosphate from alpha-D-glucosamine 6-phosphate (route II): step 2/2. The protein operates within nucleotide-sugar biosynthesis; UDP-N-acetyl-alpha-D-glucosamine biosynthesis; UDP-N-acetyl-alpha-D-glucosamine from N-acetyl-alpha-D-glucosamine 1-phosphate: step 1/1. It functions in the pathway bacterial outer membrane biogenesis; LPS lipid A biosynthesis. Catalyzes the last two sequential reactions in the de novo biosynthetic pathway for UDP-N-acetylglucosamine (UDP-GlcNAc). The C-terminal domain catalyzes the transfer of acetyl group from acetyl coenzyme A to glucosamine-1-phosphate (GlcN-1-P) to produce N-acetylglucosamine-1-phosphate (GlcNAc-1-P), which is converted into UDP-GlcNAc by the transfer of uridine 5-monophosphate (from uridine 5-triphosphate), a reaction catalyzed by the N-terminal domain. The protein is Bifunctional protein GlmU of Salmonella paratyphi A (strain ATCC 9150 / SARB42).